A 343-amino-acid polypeptide reads, in one-letter code: NADP-dependent alkenal double bond reductase P2 (343 aa).

Residues tyrosine 52 and tyrosine 79 each coordinate substrate. NADP(+) is bound by residues 164 to 167, lysine 190, tyrosine 206, asparagine 230, 252 to 258, 282 to 284, and asparagine 332; these read GAVG, CGMISQY, and FVV.

The protein belongs to the NADP-dependent oxidoreductase L4BD family. In terms of assembly, homodimer.

The catalysed reaction is an n-alkanal + NAD(+) = an alk-2-enal + NADH + H(+). It catalyses the reaction an n-alkanal + NADP(+) = an alk-2-enal + NADPH + H(+). Functionally, catalyzes the reduction of the 7-8 double bond of phenylpropanal substrates, such as p-coumaryl aldehyde and coniferyl aldehyde (in vitro). Has activity towards toxic substrates, such as 4-hydroxy-(2E)-nonenal (in vitro). May play a distinct role in plant antioxidant defense and is possibly involved in NAD(P)/NAD(P)h homeostasis. The polypeptide is NADP-dependent alkenal double bond reductase P2 (P2) (Arabidopsis thaliana (Mouse-ear cress)).